A 540-amino-acid chain; its full sequence is MRVNNGLTPQELEAYGISDVHDIVYNPSYDLLYQEELDPSLTGYERGVLTNLGAVAVDTGIFTGRSPKDKYIVRDDTTRDTFWWADKGKGKNDNKPLSPETWQHLKGLVTKQLSGKRLFVVDAFCGANPDTRLSVRFITEVAWQAHFVKNMFIRPSDEELAGFKPDFIVMNGAKCTNPQWKEQGLNSENFVAFNLTERMQLIGGTWYGGEMKKGMFSMMNYLLPLKGIASMHCSANVGEKGDVAVFFGLSGTGKTTLSTDPKRRLIGDDEHGWDDDGVFNFEGGCYAKTIKLSKEAEPEIYNAIRRDALLENVTVREDGTIDFDDGSKTENTRVSYPIYHIENIVKPVSKAGHATKVIFLTADAFGVLPPVSRLTADQTQYHFLSGFTAKLAGTERGITEPTPTFSACFGAAFLSLHPTQYAEVLVKRMQAAGAQAYLVNTGWNGTGKRISIKDTRAIIDAILNGSLDNAETFTLPMFNLAIPTELPGVDTKILDPRNTYASPEQWQEKAETLAKLFIDNFDKYTDTPAGAALVAAGPKL.

Arginine 65 is a substrate binding site. Lysine 87 bears the N6-acetyllysine mark. Substrate is bound by residues tyrosine 207 and lysine 213. ATP contacts are provided by residues lysine 213, histidine 232, and 248-256 (GLSGTGKTT). Mn(2+)-binding residues include lysine 213 and histidine 232. Aspartate 269 is a Mn(2+) binding site. ATP is bound by residues glutamate 297, arginine 333, 449-450 (RI), and threonine 455. Arginine 333 lines the substrate pocket. The residue at position 523 (lysine 523) is an N6-acetyllysine.

The protein belongs to the phosphoenolpyruvate carboxykinase (ATP) family. In terms of assembly, monomer. Mn(2+) is required as a cofactor.

The protein resides in the cytoplasm. The catalysed reaction is oxaloacetate + ATP = phosphoenolpyruvate + ADP + CO2. Its pathway is carbohydrate biosynthesis; gluconeogenesis. Functionally, involved in the gluconeogenesis. Catalyzes the conversion of oxaloacetate (OAA) to phosphoenolpyruvate (PEP) through direct phosphoryl transfer between the nucleoside triphosphate and OAA. This chain is Phosphoenolpyruvate carboxykinase (ATP), found in Escherichia coli O45:K1 (strain S88 / ExPEC).